Here is a 253-residue protein sequence, read N- to C-terminus: Retinoic acid early-inducible protein 1-gamma (253 aa).

The signal sequence occupies residues 1–28 (MAKAAVTKRHHFMIQKLLILLSYGYTNG). A disulfide bond links C37 and C56. N-linked (GlcNAc...) asparagine glycans are attached at residues N38, N70, N83, N143, and N156. A disulfide bond links C90 and C190. The disordered stretch occupies residues 198 to 230 (LKQSKEKPRSTSRSPSITQLTSTSPLPPPSHST). Low complexity predominate over residues 211-221 (SPSITQLTSTS). Residue S227 is the site of GPI-anchor amidated serine attachment. The propeptide at 228-253 (HSTSKKGFISVGLIFISLLFAFAFAM) is removed in mature form.

It belongs to the NKG2D ligand family. Glycosylated. Expressed predominantly in embryonic brain.

It is found in the cell membrane. Its function is as follows. Acts as a ligand for KLRK1. The sequence is that of Retinoic acid early-inducible protein 1-gamma (Raet1c) from Mus musculus (Mouse).